A 100-amino-acid chain; its full sequence is NADH-quinone oxidoreductase subunit K (100 aa).

A run of 3 helical transmembrane segments spans residues 4 to 24, 29 to 49, and 60 to 80; these read LSHA…AIIV, LFIL…FVIV, and IMYI…LALL.

Belongs to the complex I subunit 4L family. NDH-1 is composed of 13 different subunits. Subunits NuoA, H, J, K, L, M, N constitute the membrane sector of the complex.

It localises to the cell inner membrane. It catalyses the reaction a quinone + NADH + 5 H(+)(in) = a quinol + NAD(+) + 4 H(+)(out). Functionally, NDH-1 shuttles electrons from NADH, via FMN and iron-sulfur (Fe-S) centers, to quinones in the respiratory chain. The immediate electron acceptor for the enzyme in this species is believed to be ubiquinone. Couples the redox reaction to proton translocation (for every two electrons transferred, four hydrogen ions are translocated across the cytoplasmic membrane), and thus conserves the redox energy in a proton gradient. In Blochmanniella pennsylvanica (strain BPEN), this protein is NADH-quinone oxidoreductase subunit K.